The following is a 61-amino-acid chain: Small ribosomal subunit protein uS14 (61 aa).

Residues cysteine 24, cysteine 27, cysteine 40, and cysteine 43 each coordinate Zn(2+).

It belongs to the universal ribosomal protein uS14 family. Zinc-binding uS14 subfamily. As to quaternary structure, part of the 30S ribosomal subunit. Contacts proteins S3 and S10. Requires Zn(2+) as cofactor.

Functionally, binds 16S rRNA, required for the assembly of 30S particles and may also be responsible for determining the conformation of the 16S rRNA at the A site. The sequence is that of Small ribosomal subunit protein uS14 from Borrelia hermsii (strain HS1 / DAH).